A 356-amino-acid chain; its full sequence is MTAAKIKVLCVDDSALIRSLMTEIINSQPDMEVVGTAPDPLVAREMIKQLNPDVLTLDVEMPRMDGLDFLERLMRLRPMPVLMVSSLTERGSEITMRALELGAVDFVTKPKLGIRDGLMEYTDTIADKIRAASRARVRQAPQAASGTPATPMLRSPLLSTEKLIILGASTGGTEAIKDFLMPLPPDSPAVLIVQHMPAGFTRSFAQRLDGLCRITVKEAEHGERVLPGYAYIAPGDSHLRLARSGANYVAHLSQEAPVNRHRPSVDVLFDSAAEHGGKNVIGVILTGMGKDGAKGMLRMREAGAYNLAQDESTCIVFGMPKEAIAAGGVHEVVPLHSMTQRVMARLATYGTRAQRV.

The Response regulatory domain maps to 7–124 (KVLCVDDSAL…RDGLMEYTDT (118 aa)). Residue D58 is modified to 4-aspartylphosphate. A CheB-type methylesterase domain is found at 157–349 (LLSTEKLIIL…QRVMARLATY (193 aa)). Residues S169, H195, and D291 contribute to the active site.

The protein belongs to the CheB family. Post-translationally, phosphorylated by CheA. Phosphorylation of the N-terminal regulatory domain activates the methylesterase activity.

Its subcellular location is the cytoplasm. The catalysed reaction is [protein]-L-glutamate 5-O-methyl ester + H2O = L-glutamyl-[protein] + methanol + H(+). It catalyses the reaction L-glutaminyl-[protein] + H2O = L-glutamyl-[protein] + NH4(+). Functionally, involved in chemotaxis. Part of a chemotaxis signal transduction system that modulates chemotaxis in response to various stimuli. Catalyzes the demethylation of specific methylglutamate residues introduced into the chemoreceptors (methyl-accepting chemotaxis proteins or MCP) by CheR. Also mediates the irreversible deamidation of specific glutamine residues to glutamic acid. This Cupriavidus pinatubonensis (strain JMP 134 / LMG 1197) (Cupriavidus necator (strain JMP 134)) protein is Protein-glutamate methylesterase/protein-glutamine glutaminase 2.